Reading from the N-terminus, the 509-residue chain is MELEAKLHEIKKPIMVLGTSSGAGKSLTVTAICRILKNLGEEPIPFKGQNMSNNAWVDWEGGEMAYSQALQAFACGINPAAEMNPILLKPQGNSISEVIHLGKSIGTTTAKNYYKDWFTPGWEVIKKSLKSIYEGNPNCRLIIEGAGSPVEMNLIHRDLTNLRVAKYLNANCILVTDIERGGVFAQIIGTLELMKPEEKKLIKGIIINRFRGDLSLFEDGKKWIENKTQIPVVGIIPWLNDSFPPEDSLDLIEKKSLSKNPEIKVGIIKLPSISNFSDFDPLENEETIFIEWIRKSQNLSKYDFIILPGSKQTIKDQIFLENSGLSKDIRDYSKNKGNIVGICGGLQMLGTTLEDPYFKEGSKNYSEQKIKGIGLLPLKTTFFKKKLTRQIKSKSIWPCQSEINGFEIHNGQTVLDEIQSSLKINPIFEDSDLGWYKENNKGGTIAGTYIHGIFENDSWREHYINLIRKSKNLPTLNKKSISYKEKRQFIIDNLANEFHKHLNLKSFLS.

The 198-residue stretch at 262-459 (EIKVGIIKLP…IHGIFENDSW (198 aa)) folds into the GATase cobBQ-type domain. Cys343 functions as the Nucleophile in the catalytic mechanism. Residue His451 is part of the active site.

Belongs to the CobB/CobQ family. CobQ subfamily.

Its pathway is cofactor biosynthesis; adenosylcobalamin biosynthesis. Its function is as follows. Catalyzes amidations at positions B, D, E, and G on adenosylcobyrinic A,C-diamide. NH(2) groups are provided by glutamine, and one molecule of ATP is hydrogenolyzed for each amidation. This is Cobyric acid synthase from Prochlorococcus marinus (strain MIT 9301).